The following is a 524-amino-acid chain: MVPQALLFVPLLVFPLCFGKFPIYTIPDKLGPWSPIDIHHLRCPNNLVVEDEGCTNLSGFSYMELKVGYISAIKVNGFTCTGVVTEAETYTNFVGYVTTTFKRKHFRPTPDACRAAYNWKMAGDPRYEESLHNPYPDYHWLRTVKTTKESLVIISPSVADLDPYDKSLHSRVFPSGNCSGITVSSTYCSTNHDYTIWMPENPRLETSCDIFTNSRGKRASKGSKTCGFVDERGLYKSLKGACKLKLCGVLGLRLMDGTWVAMQTSDETKWCPPDQLVNLHDFRSDEIEHLVVEELVKKREECLDALESIMTTKSVSLRRLSHLRKLVPGFGKAYTIFNKTLMEAEAHYKSVQTWNEIIPSKGCLRVGGRCHPHVNGVFFNGIILGPDGHVLIPEMQSSLLQQHMELLESSVIPLMHPLADPSTVFKDGDEAEDFVEVHLPDVHKQVSGVDLGLPNWGKYVLLSAGTLIALMLIIFLMTCCRRVNRPKSTERSLGETGRKVSVTSQSGKVISSWESYKSGGETRR.

Positions 1-19 are cleaved as a signal peptide; the sequence is MVPQALLFVPLLVFPLCFG. Residues 20-459 lie on the Virion surface side of the membrane; sequence KFPIYTIPDK…DLGLPNWGKY (440 aa). Disulfide bonds link Cys-43/Cys-302, Cys-54/Cys-226, Cys-80/Cys-113, Cys-178/Cys-188, Cys-208/Cys-247, and Cys-242/Cys-271. N-linked (GlcNAc...) asparagine; by host glycosylation occurs at Asn-56. An N-linked (GlcNAc...) asparagine; by host glycan is attached at Asn-177. N-linked (GlcNAc...) asparagine; by host glycosylation occurs at Asn-338. A disulfide bridge connects residues Cys-363 and Cys-370. Residues 460–480 form a helical membrane-spanning segment; sequence VLLSAGTLIALMLIIFLMTCC. Cys-480 carries the S-palmitoyl cysteine; by host lipid modification. The Intravirion portion of the chain corresponds to 481-524; the sequence is RRVNRPKSTERSLGETGRKVSVTSQSGKVISSWESYKSGGETRR. The span at 487–498 shows a compositional bias: basic and acidic residues; it reads KSTERSLGETGR. The disordered stretch occupies residues 487–509; it reads KSTERSLGETGRKVSVTSQSGKV.

This sequence belongs to the lyssavirus glycoprotein family. In terms of assembly, homotrimer. Interacts with matrix protein. Interacts with host TRFC. Interacts with host BST2; this interaction inhibits viral budding by tethering new virions to the cell surface. Interacts with ITGB1. Interacts with host GRM2. In terms of processing, glycosylated and palmitoylated by host. Glycosylation is crucial for glycoprotein export at the cell surface.

It localises to the virion membrane. Attaches the virus to host cellular receptor, inducing endocytosis of the virion by using different host proteins including TFRC, GRM2 and ITGB1. In the endosome, the acidic pH induces conformational changes in the glycoprotein trimer, which trigger fusion between virus and cell membrane. There is convincing in vitro evidence that the muscular form of the nicotinic acetylcholine receptor (nAChR), the neuronal cell adhesion molecule (NCAM), and the p75 neurotrophin receptor (p75NTR) bind glycoprotein and thereby facilitate rabies virus entry into cells. In Rabies virus (isolate Human/Algeria/1991) (RABV), this protein is Glycoprotein (G).